The primary structure comprises 328 residues: Trans-O-hydroxybenzylidenepyruvate hydratase-aldolase (328 aa).

Belongs to the DapA family. In terms of assembly, homotrimer.

The enzyme catalyses (3E)-4-(2-hydroxyphenyl)-2-oxobut-3-enoate + H2O = salicylaldehyde + pyruvate. The protein operates within aromatic compound metabolism; naphthalene degradation. Its activity is regulated as follows. Inhibited bye p-chloromercuribenzoate and salicylaldehyde. Activated by salicylate. In terms of biological role, involved in the naphthalene and naphthalenesulfonate catabolic pathway. Catalyzes the transformation of trans-O-hydroxybenzylidenepyruvate (THBPA) to salicylaldehyde and pyruvate. The reaction is reversible. Can also use 2,4-dihydroxybenzalpyruvate (2,4-DHBP) and 2,6-dihydroxybenzalpyruvate (2,6-DHBP). The polypeptide is Trans-O-hydroxybenzylidenepyruvate hydratase-aldolase (nsaE) (Sphingobium xenophagum).